The primary structure comprises 261 residues: MASNNDSIKKTLGVVVGLSLVCSIIVSTAAVGLRDQQKANAVLDKQSKIVEVAGIDAEGKKVPELFAEYIEPRLVDFKTGDFVEKAEDGSTAANYDQRKAAKDPAESIKLTADEDKAKILRRANTGIVYLVKNGDDISKVIIPVHGNGLWSMMYAFVAVETDGNTVSGITYYEQGETPGLGGEVENPVWRAQFVGKKLFDENHKPAIKIVKGGAPEGSEHGVDGLSGATLTGNGVQGTFDFWLGDMGFGPFLAKVRDGGLN.

The chain crosses the membrane as a helical span at residues 12–32; sequence LGVVVGLSLVCSIIVSTAAVG. An FMN phosphoryl threonine modification is found at Thr229.

Composed of six subunits; NqrA, NqrB, NqrC, NqrD, NqrE and NqrF. FMN serves as cofactor.

It localises to the cell inner membrane. The enzyme catalyses a ubiquinone + n Na(+)(in) + NADH + H(+) = a ubiquinol + n Na(+)(out) + NAD(+). Functionally, NQR complex catalyzes the reduction of ubiquinone-1 to ubiquinol by two successive reactions, coupled with the transport of Na(+) ions from the cytoplasm to the periplasm. NqrA to NqrE are probably involved in the second step, the conversion of ubisemiquinone to ubiquinol. This Vibrio campbellii (strain ATCC BAA-1116) protein is Na(+)-translocating NADH-quinone reductase subunit C.